A 1781-amino-acid chain; its full sequence is Chitin synthase 7 (1781 aa).

Residues Asn-133, Asn-534, Asn-629, Asn-644, Asn-655, and Asn-660 are each glycosylated (N-linked (GlcNAc...) asparagine). The next 2 helical transmembrane spans lie at 741–761 (AWVA…LKFV) and 777–797 (LVLF…IIGF). N-linked (GlcNAc...) asparagine glycosylation is found at Asn-889 and Asn-1011. Residues 1048–1068 (LLLAFAIIICIVTAVKFLAAL) traverse the membrane as a helical segment. N-linked (GlcNAc...) asparagine glycosylation is present at Asn-1413. 3 consecutive transmembrane segments (helical) span residues 1444-1464 (LTGT…IYVL), 1471-1491 (IPYI…LIFI), and 1499-1519 (IGWM…LPLY). Asn-1526 is a glycosylation site (N-linked (GlcNAc...) asparagine). The tract at residues 1677 to 1712 (QANLSPAAGGGHSRSGTALGFSSGSRSPMPDAMRSQ) is disordered. Over residues 1690-1702 (RSGTALGFSSGSR) the composition is skewed to polar residues. The DEK-C domain occupies 1723–1779 (GPTDMAIVESIRSVLCEVDLDTVTKKQVRALVEQRLQTELVGERRTFMDRQIDHELE).

It belongs to the chitin synthase family. Class V subfamily.

The protein resides in the cell membrane. It catalyses the reaction [(1-&gt;4)-N-acetyl-beta-D-glucosaminyl](n) + UDP-N-acetyl-alpha-D-glucosamine = [(1-&gt;4)-N-acetyl-beta-D-glucosaminyl](n+1) + UDP + H(+). Its function is as follows. Polymerizes chitin, a structural polymer of the cell wall and septum, by transferring the sugar moiety of UDP-GlcNAc to the non-reducing end of the growing chitin polymer. Shows additive effects in septum formation with CHS1, CHS2, CHS3A, CHS4, CHS5 and CHS6. Indispensable for perithecia formation and regulates conidiation. Plays an important role in the response to cell wall stress. Also required for hyphal growth and pathogenicity. The polypeptide is Chitin synthase 7 (Gibberella zeae (strain ATCC MYA-4620 / CBS 123657 / FGSC 9075 / NRRL 31084 / PH-1) (Wheat head blight fungus)).